A 1050-amino-acid polypeptide reads, in one-letter code: Self-sufficient cytochrome P450 monooxygenase CYP505E5 (1050 aa).

Heme is bound at residue Cys405. The tract at residues 461–495 is disordered; sequence TATGLSRRSMLVARDGSSEESSNHPAEARGDHAPA. Residues 500-641 enclose the Flavodoxin-like domain; sequence VSFFYGSNSG…DLEAWEETSL (142 aa). Residues 506–510 and 585–617 each bind FMN; these read SNSGT and VFGC…TRLA. The 229-residue stretch at 679–907 folds into the FAD-binding FR-type domain; that stretch reads KGLIEAKVTA…RPAKETFHLP (229 aa).

This sequence in the N-terminal section; belongs to the cytochrome P450 family. FAD serves as cofactor. It depends on FMN as a cofactor. The cofactor is heme.

The catalysed reaction is 2 oxidized [cytochrome P450] + NADPH = 2 reduced [cytochrome P450] + NADP(+) + H(+). It catalyses the reaction an organic molecule + reduced [NADPH--hemoprotein reductase] + O2 = an alcohol + oxidized [NADPH--hemoprotein reductase] + H2O + H(+). It carries out the reaction dodecanoate + reduced [NADPH--hemoprotein reductase] + O2 = 5-hydroxydodecanoate + oxidized [NADPH--hemoprotein reductase] + H2O + H(+). The enzyme catalyses tetradecanoate + reduced [NADPH--hemoprotein reductase] + O2 = 7-hydroxytetradecanoate + oxidized [NADPH--hemoprotein reductase] + H2O + H(+). The catalysed reaction is dodecan-1-ol + reduced [NADPH--hemoprotein reductase] + O2 = 1,5-dodecanediol + oxidized [NADPH--hemoprotein reductase] + H2O + H(+). It catalyses the reaction dodecan-1-ol + reduced [NADPH--hemoprotein reductase] + O2 = 1,4-dodecanediol + oxidized [NADPH--hemoprotein reductase] + H2O + H(+). It carries out the reaction dodecan-1-ol + reduced [NADPH--hemoprotein reductase] + O2 = 1,6-dodecanediol + oxidized [NADPH--hemoprotein reductase] + H2O + H(+). Self-sufficient cytochrome P450 monooxygenase that catalyzes the regioselective in-chain hydroxylation of alkanes, fatty alcohols, and fatty acids at the omega-7 position. Performs hydroxylation of C10-C16 n-alkanes and C12 and C14 fatty alcohols; and thereby enables the one step biocatalytic synthesis of rare alcohols such as 5-dodecanol and 7-tetradecanol. Converts 1-dodecanol into 1,5-dodecanediol as major product with very little sub-terminally hydroxylated products with the 1,4-dodecanediol and 1,6-dodecanediol more abundant. Converts dodecanoic acid to 5-hydroxydodecanoic acid which can be further converted into delta-dodecalactone by lactonization of the 5-hydroxy acid at low pH. Also gives sub-terminal hydroxylation of dodecanoic acid with 9-hydroxydodecanoic acid being the second most abundant product. In Aspergillus kawachii (strain NBRC 4308) (White koji mold), this protein is Self-sufficient cytochrome P450 monooxygenase CYP505E5.